A 461-amino-acid polypeptide reads, in one-letter code: Transforming growth factor beta-1-induced transcript 1 protein (461 aa).

Met1 is subject to N-acetylmethionine. Positions 1–87 (MEDLDALLSD…PFSSSSGVLG (87 aa)) are disordered. The tract at residues 1-200 (MEDLDALLSD…GSPSPPEPTG (200 aa)) is transcription activation. The tract at residues 1 to 240 (MEDLDALLSD…CNKPIAGQVV (240 aa)) is interaction with PTK2B/PYK2. The LD motif 1 motif lies at 3–15 (DLDALLSDLETTT). Thr33 carries the post-translational modification Phosphothreonine. Tyr38 is modified (phosphotyrosine). Polar residues predominate over residues 40–52 (HQPQTGSGESSGA). Tyr60 is subject to Phosphotyrosine; by FAK2 and FYN. Ser68 carries the post-translational modification Phosphoserine. The tract at residues 83 to 136 (SGVLGTGLCELDRLLQELNATQFNITDEIMSQFPSSKVASGEQKEDQSEDKKRP) is interaction with PTK2/FAK1. Residues 92–104 (ELDRLLQELNATQ) carry the LD motif 2 motif. A disordered region spans residues 116–152 (PSSKVASGEQKEDQSEDKKRPSLPSSPSPGLPKASAT). The segment covering 124-135 (EQKEDQSEDKKR) has biased composition (basic and acidic residues). Phosphoserine is present on residues Ser137, Ser140, Ser141, Ser143, Ser164, and Ser186. Residues 157–168 (ELDRLMASLSDF) carry the LD motif 3 motif. Residues 172-205 (NHLPASGPTQPPVVSSTNEGSPSPPEPTGKGSLD) are disordered. Polar residues predominate over residues 183-192 (PVVSSTNEGS). Thr188 is modified (phosphothreonine). Phosphoserine occurs at positions 192 and 194. Residues 203–215 (SLDTMLGLLQSDL) carry the LD motif 4 motif. 4 LIM zinc-binding domains span residues 226–285 (GLCG…RFSP), 286–343 (RCGF…QLFA), 344–403 (PRCQ…RRGS), and 404–461 (LCAT…KLFG). The residue at position 403 (Ser403) is a Phosphoserine. Thr407 carries the post-translational modification Phosphothreonine.

This sequence belongs to the paxillin family. Homooligomer. Interacts with PPARG. Interacts with TRAF4. Interacts with CRIP2. Interacts with HSPB1. Interacts with ILK. Interacts with LIMS1 and LIMS2. Interacts with NCK2. Interacts with NUDT16L1. Interacts with PAK. Interacts with PTPN12. Interacts with TCF3. Interacts with TCF7L2. Interacts with VCL. Interacts (via LD motif 3) with GIT1. Also interacts with GIT2. Forms a complex with ARHGEF7. Interacts with AR/androgen receptor in a ligand-dependent manner. Interacts with CSK. Interacts with PTK2/FAK1 and PTK2B/PYK2. Interacts with SLC6A3 and SLC6A4. Interacts with NR3C1. Interacts with SMAD3. Interacts with MAPK15. Interacts with SRC. Interacts with LYN. Interacts with talin. Interacts (via LIM zinc-binding domain 2) with CBLC (via RING-type zinc finger); the interaction is direct and enhances CBLC E3 ubiquitin-protein ligase activity. Interacts with PARVA. Interacts with PXN. In terms of processing, phosphorylated by gonadotropin-releasing hormone-activated SRC. Expressed in platelets, smooth muscle and prostate stromal cells (at protein level).

The protein resides in the cell junction. It is found in the focal adhesion. It localises to the nucleus matrix. Its subcellular location is the cytoplasm. The protein localises to the cytoskeleton. Functions as a molecular adapter coordinating multiple protein-protein interactions at the focal adhesion complex and in the nucleus. Links various intracellular signaling modules to plasma membrane receptors and regulates the Wnt and TGFB signaling pathways. May also regulate SLC6A3 and SLC6A4 targeting to the plasma membrane hence regulating their activity. In the nucleus, functions as a nuclear receptor coactivator regulating glucocorticoid, androgen, mineralocorticoid and progesterone receptor transcriptional activity. May play a role in the processes of cell growth, proliferation, migration, differentiation and senescence. May have a zinc-dependent DNA-binding activity. This chain is Transforming growth factor beta-1-induced transcript 1 protein (TGFB1I1), found in Homo sapiens (Human).